Consider the following 257-residue polypeptide: Short-chain dehydrogenase reductase 3b (257 aa).

12-36 (IITGGASGIGAESVRLFTEHGARVV) provides a ligand contact to NAD(+). Serine 144 provides a ligand contact to substrate. The active-site Proton acceptor is the tyrosine 157.

The protein belongs to the short-chain dehydrogenases/reductases (SDR) family.

The protein is Short-chain dehydrogenase reductase 3b (SDR3b) of Arabidopsis thaliana (Mouse-ear cress).